The sequence spans 106 residues: Stress-responsive protein 1 (106 aa).

The protein localises to the mitochondrion. Stress-responsive protein that may play a role in regulation of cell cycle. The polypeptide is Stress-responsive protein 1 (sro1) (Schizosaccharomyces pombe (strain 972 / ATCC 24843) (Fission yeast)).